Here is an 84-residue protein sequence, read N- to C-terminus: Mu-conotoxin-like Cal 12.2b (84 aa).

The N-terminal stretch at 1–19 (MKLTCVLVVLLLVLPFGDL) is a signal peptide. The propeptide occupies 20 to 42 (ITTSNTEDNKRGATPWQNSLKAR). 4 disulfides stabilise this stretch: Cys-45–Cys-57, Cys-52–Cys-65, Cys-59–Cys-70, and Cys-64–Cys-76. The residue at position 72 (Trp-72) is a 6'-bromotryptophan. 4-hydroxyproline is present on Pro-77. A 6'-bromotryptophan modification is found at Trp-81.

This sequence belongs to the conotoxin O1 superfamily. Expressed by the venom duct.

It localises to the secreted. Mu-conotoxins block voltage-gated sodium channels. This toxin reversibly blocks voltage-gated sodium channel in cephalopods, with no alteration in the voltage dependence of sodium conductance or on the kinetics of inactivation. The protein is Mu-conotoxin-like Cal 12.2b of Californiconus californicus (California cone).